A 202-amino-acid chain; its full sequence is Potassium-transporting ATPase KdpC subunit 1 (202 aa).

Residues 17–37 (LWVIAAVIYPFFMIAVGQIVF) form a helical membrane-spanning segment.

Belongs to the KdpC family. In terms of assembly, the system is composed of three essential subunits: KdpA, KdpB and KdpC.

The protein localises to the cell inner membrane. Part of the high-affinity ATP-driven potassium transport (or Kdp) system, which catalyzes the hydrolysis of ATP coupled with the electrogenic transport of potassium into the cytoplasm. This subunit acts as a catalytic chaperone that increases the ATP-binding affinity of the ATP-hydrolyzing subunit KdpB by the formation of a transient KdpB/KdpC/ATP ternary complex. This is Potassium-transporting ATPase KdpC subunit 1 from Nostoc sp. (strain PCC 7120 / SAG 25.82 / UTEX 2576).